The chain runs to 539 residues: GMP synthase [glutamine-hydrolyzing] (539 aa).

In terms of domain architecture, Glutamine amidotransferase type-1 spans 4-202 (KILILDFGSQ…VLQIAGAKPD (199 aa)). The active-site Nucleophile is C81. Catalysis depends on residues H176 and E178. The GMPS ATP-PPase domain maps to 203–395 (WIMKNHIEEA…LGLPPEMVYR (193 aa)). ATP is bound at residue 230-236 (SGGVDSS).

As to quaternary structure, homodimer.

It catalyses the reaction XMP + L-glutamine + ATP + H2O = GMP + L-glutamate + AMP + diphosphate + 2 H(+). The protein operates within purine metabolism; GMP biosynthesis; GMP from XMP (L-Gln route): step 1/1. Catalyzes the synthesis of GMP from XMP. The sequence is that of GMP synthase [glutamine-hydrolyzing] from Burkholderia vietnamiensis (strain G4 / LMG 22486) (Burkholderia cepacia (strain R1808)).